We begin with the raw amino-acid sequence, 1059 residues long: Probable sucrose-phosphate synthase (1059 aa).

Disordered stretches follow at residues 95–145, 671–695, 710–731, and 748–769; these read AVQR…VKSR, RHPQ…GDSL, DGER…NATD, and SKDT…ASKF. Over residues 102–114 the composition is skewed to basic and acidic residues; sequence RRLERERGRREAT. The span at 681 to 691 shows a compositional bias: acidic residues; that stretch reads GGESSESEESP.

It belongs to the glycosyltransferase 1 family. In terms of assembly, homodimer or homotetramer.

It carries out the reaction beta-D-fructose 6-phosphate + UDP-alpha-D-glucose = sucrose 6(F)-phosphate + UDP + H(+). It participates in glycan biosynthesis; sucrose biosynthesis; sucrose from D-fructose 6-phosphate and UDP-alpha-D-glucose: step 1/2. Its activity is regulated as follows. Activity is regulated by phosphorylation and moderated by concentration of metabolites and light. Its function is as follows. Plays a role in photosynthetic sucrose synthesis by catalyzing the rate-limiting step of sucrose biosynthesis from UDP-glucose and fructose- 6-phosphate. Involved in the regulation of carbon partitioning in the leaves of plants. May regulate the synthesis of sucrose and therefore play a major role as a limiting factor in the export of photoassimilates out of the leaf. Plays a role for sucrose availability that is essential for plant growth and fiber elongation. This is Probable sucrose-phosphate synthase (SPS) from Vicia faba (Broad bean).